The sequence spans 157 residues: Endoribonuclease YbeY (157 aa).

Positions 111, 115, and 121 each coordinate Zn(2+).

The protein belongs to the endoribonuclease YbeY family. It depends on Zn(2+) as a cofactor.

It is found in the cytoplasm. In terms of biological role, single strand-specific metallo-endoribonuclease involved in late-stage 70S ribosome quality control and in maturation of the 3' terminus of the 16S rRNA. This chain is Endoribonuclease YbeY, found in Pseudomonas putida (strain ATCC 47054 / DSM 6125 / CFBP 8728 / NCIMB 11950 / KT2440).